A 396-amino-acid chain; its full sequence is Elongation factor Tu (396 aa).

Residues 11–205 (KPHVNIGTIG…TVDEYIPTPE (195 aa)) form the tr-type G domain. The G1 stretch occupies residues 20–27 (GHVDHGKT). A GTP-binding site is contributed by 20 to 27 (GHVDHGKT). Threonine 27 serves as a coordination point for Mg(2+). Residues 61 to 65 (GITIN) are G2. The G3 stretch occupies residues 82 to 85 (DAPG). GTP contacts are provided by residues 82–86 (DAPGH) and 137–140 (NKCD). Residues 137–140 (NKCD) are G4. Positions 175 to 177 (SAL) are G5.

Belongs to the TRAFAC class translation factor GTPase superfamily. Classic translation factor GTPase family. EF-Tu/EF-1A subfamily. As to quaternary structure, monomer.

Its subcellular location is the cytoplasm. The catalysed reaction is GTP + H2O = GDP + phosphate + H(+). Its function is as follows. GTP hydrolase that promotes the GTP-dependent binding of aminoacyl-tRNA to the A-site of ribosomes during protein biosynthesis. This is Elongation factor Tu from Lactobacillus helveticus (strain DPC 4571).